Consider the following 337-residue polypeptide: Ribosomal RNA small subunit methyltransferase H (337 aa).

S-adenosyl-L-methionine contacts are provided by residues 45–47, aspartate 64, histidine 91, aspartate 112, and glutamine 119; that span reads GGH.

It belongs to the methyltransferase superfamily. RsmH family.

It is found in the cytoplasm. The catalysed reaction is cytidine(1402) in 16S rRNA + S-adenosyl-L-methionine = N(4)-methylcytidine(1402) in 16S rRNA + S-adenosyl-L-homocysteine + H(+). Specifically methylates the N4 position of cytidine in position 1402 (C1402) of 16S rRNA. The protein is Ribosomal RNA small subunit methyltransferase H of Cutibacterium acnes (strain DSM 16379 / KPA171202) (Propionibacterium acnes).